The sequence spans 207 residues: MARYTGPVCRLCRREGVKLYLKGEKCYSDKCPIVKRATPPGQHGASRRKPTEYAIQLREKQKARRYYGVLERQFERYFEMASRKKGVTGEVLLQTLERRLDNVVYRMGFAASRAEARQIVKHSHIEVNGRKVNIPSYLVREGDVVAVRESSREHKRIKELAAAATRTVPAWLSVDPEALRGTVLRLPNRDEIDTPVQEQLIVEFYSR.

Residues 98–161 (RRLDNVVYRM…REHKRIKELA (64 aa)) enclose the S4 RNA-binding domain.

The protein belongs to the universal ribosomal protein uS4 family. Part of the 30S ribosomal subunit. Contacts protein S5. The interaction surface between S4 and S5 is involved in control of translational fidelity.

One of the primary rRNA binding proteins, it binds directly to 16S rRNA where it nucleates assembly of the body of the 30S subunit. Functionally, with S5 and S12 plays an important role in translational accuracy. The polypeptide is Small ribosomal subunit protein uS4A (Symbiobacterium thermophilum (strain DSM 24528 / JCM 14929 / IAM 14863 / T)).